Consider the following 273-residue polypeptide: Putative ankyrin repeat protein RBE_0317 (273 aa).

5 ANK repeats span residues Leu31 to Ser60, Asn93 to Thr123, Gly127 to Glu157, Tyr161 to Glu191, and Gln195 to Gln225.

The polypeptide is Putative ankyrin repeat protein RBE_0317 (Rickettsia bellii (strain RML369-C)).